Consider the following 368-residue polypeptide: Alanine racemase (368 aa).

The Proton acceptor; specific for D-alanine role is filled by Lys40. Lys40 is subject to N6-(pyridoxal phosphate)lysine. Arg134 contributes to the substrate binding site. Tyr263 serves as the catalytic Proton acceptor; specific for L-alanine. A substrate-binding site is contributed by Met310.

The protein belongs to the alanine racemase family. Pyridoxal 5'-phosphate is required as a cofactor.

The catalysed reaction is L-alanine = D-alanine. Its pathway is amino-acid biosynthesis; D-alanine biosynthesis; D-alanine from L-alanine: step 1/1. Functionally, catalyzes the interconversion of L-alanine and D-alanine. May also act on other amino acids. This Listeria monocytogenes serotype 1/2a (strain 10403S) protein is Alanine racemase (alr).